Consider the following 272-residue polypeptide: uncharacterized protein (272 aa).

Residue K185 is the Schiff-base intermediate with substrate of the active site.

It belongs to the DeoC/FbaB aldolase family.

This is an uncharacterized protein from Saccharolobus solfataricus (strain ATCC 35092 / DSM 1617 / JCM 11322 / P2) (Sulfolobus solfataricus).